A 159-amino-acid chain; its full sequence is MPTKNDGAAVWELIHQIDNLDLNSSYSYLLWCDMFSETSIVVEEEGEVVGFISGFIHPNKPNTLFIWQVAVEAAQRGKGLGTHMLLQLLNRKRIAQVQYIEATVAPSNLPSQYLFLGLAKKLDTECVVGNYYTSVDFPRTGHEDEQLYKIGPIRRANNK.

In terms of domain architecture, N-acetyltransferase spans 1–138 (MPTKNDGAAV…GNYYTSVDFP (138 aa)).

The protein belongs to the acetyltransferase family. EctA subfamily.

It carries out the reaction L-2,4-diaminobutanoate + acetyl-CoA = (2S)-4-acetamido-2-aminobutanoate + CoA + H(+). It functions in the pathway amine and polyamine biosynthesis; ectoine biosynthesis; L-ectoine from L-aspartate 4-semialdehyde: step 2/3. Catalyzes the acetylation of L-2,4-diaminobutyrate (DABA) to gamma-N-acetyl-alpha,gamma-diaminobutyric acid (ADABA) with acetyl coenzyme A. The polypeptide is L-2,4-diaminobutyric acid acetyltransferase (ectA) (Virgibacillus pantothenticus).